Here is a 258-residue protein sequence, read N- to C-terminus: NAD kinase (258 aa).

Residue D51 is the Proton acceptor of the active site. NAD(+) contacts are provided by residues 51–52 (DG), K56, 119–120 (ND), K130, D149, 160–165 (TAYSLS), and A184.

The protein belongs to the NAD kinase family. A divalent metal cation is required as a cofactor.

The protein resides in the cytoplasm. The catalysed reaction is NAD(+) + ATP = ADP + NADP(+) + H(+). Its function is as follows. Involved in the regulation of the intracellular balance of NAD and NADP, and is a key enzyme in the biosynthesis of NADP. Catalyzes specifically the phosphorylation on 2'-hydroxyl of the adenosine moiety of NAD to yield NADP. This is NAD kinase from Thermotoga petrophila (strain ATCC BAA-488 / DSM 13995 / JCM 10881 / RKU-1).